Consider the following 135-residue polypeptide: Interleukin-4 (135 aa).

The first 24 residues, 1–24 (MGLTSQLIPVLVCLLACTSHFVHG), serve as a signal peptide directing secretion. 3 disulfide bridges follow: Cys27–Cys135, Cys48–Cys85, and Cys70–Cys105. N-linked (GlcNAc...) asparagine glycans are attached at residues Asn62 and Asn96.

It belongs to the IL-4/IL-13 family.

It is found in the secreted. In terms of biological role, participates in at least several B-cell activation processes as well as of other cell types. It is a costimulator of DNA-synthesis. It induces the expression of class II MHC molecules on resting B-cells. It enhances both secretion and cell surface expression of IgE and IgG1. It also regulates the expression of the low affinity Fc receptor for IgE (CD23) on both lymphocytes and monocytes. Positively regulates IL31RA expression in macrophages. Stimulates autophagy in dendritic cells by interfering with mTORC1 signaling and through the induction of RUFY4. The polypeptide is Interleukin-4 (IL4) (Cervus elaphus (Red deer)).